The sequence spans 238 residues: Pyridoxine 5'-phosphate synthase (238 aa).

Position 7 (Asn7) interacts with 3-amino-2-oxopropyl phosphate. 9-10 lines the 1-deoxy-D-xylulose 5-phosphate pocket; the sequence is DH. Residue Arg18 participates in 3-amino-2-oxopropyl phosphate binding. His43 acts as the Proton acceptor in catalysis. 2 residues coordinate 1-deoxy-D-xylulose 5-phosphate: Arg45 and His50. Glu70 acts as the Proton acceptor in catalysis. 1-deoxy-D-xylulose 5-phosphate is bound at residue Thr100. The Proton donor role is filled by His190. Residues Gly191 and 212–213 contribute to the 3-amino-2-oxopropyl phosphate site; that span reads GH.

The protein belongs to the PNP synthase family. In terms of assembly, homooctamer; tetramer of dimers.

The protein localises to the cytoplasm. The catalysed reaction is 3-amino-2-oxopropyl phosphate + 1-deoxy-D-xylulose 5-phosphate = pyridoxine 5'-phosphate + phosphate + 2 H2O + H(+). It functions in the pathway cofactor biosynthesis; pyridoxine 5'-phosphate biosynthesis; pyridoxine 5'-phosphate from D-erythrose 4-phosphate: step 5/5. In terms of biological role, catalyzes the complicated ring closure reaction between the two acyclic compounds 1-deoxy-D-xylulose-5-phosphate (DXP) and 3-amino-2-oxopropyl phosphate (1-amino-acetone-3-phosphate or AAP) to form pyridoxine 5'-phosphate (PNP) and inorganic phosphate. The polypeptide is Pyridoxine 5'-phosphate synthase (Prochlorococcus marinus (strain MIT 9312)).